Reading from the N-terminus, the 444-residue chain is Homogentisate 1,2-dioxygenase (444 aa).

His-298 acts as the Proton acceptor in catalysis. Fe cation-binding residues include His-341 and Glu-347. 2 residues coordinate homogentisate: Tyr-356 and His-377. His-377 is a binding site for Fe cation.

This sequence belongs to the homogentisate dioxygenase family. Hexamer; dimer of trimers. It depends on Fe cation as a cofactor.

The enzyme catalyses homogentisate + O2 = 4-maleylacetoacetate + H(+). It functions in the pathway amino-acid degradation; L-phenylalanine degradation; acetoacetate and fumarate from L-phenylalanine: step 4/6. Its function is as follows. Involved in the catabolism of homogentisate (2,5-dihydroxyphenylacetate or 2,5-OH-PhAc), a central intermediate in the degradation of phenylalanine and tyrosine. Catalyzes the oxidative ring cleavage of the aromatic ring of homogentisate to yield maleylacetoacetate. The protein is Homogentisate 1,2-dioxygenase of Burkholderia ambifaria (strain ATCC BAA-244 / DSM 16087 / CCUG 44356 / LMG 19182 / AMMD) (Burkholderia cepacia (strain AMMD)).